A 255-amino-acid chain; its full sequence is Diphthine synthase (255 aa).

Residues Leu-9, Asp-85, Val-88, 113 to 114 (SI), Leu-164, Ala-207, and His-232 each bind S-adenosyl-L-methionine.

It belongs to the diphthine synthase family. As to quaternary structure, homodimer.

The enzyme catalyses 2-[(3S)-amino-3-carboxypropyl]-L-histidyl-[translation elongation factor 2] + 3 S-adenosyl-L-methionine = diphthine-[translation elongation factor 2] + 3 S-adenosyl-L-homocysteine + 3 H(+). The protein operates within protein modification; peptidyl-diphthamide biosynthesis. Functionally, S-adenosyl-L-methionine-dependent methyltransferase that catalyzes the trimethylation of the amino group of the modified target histidine residue in translation elongation factor 2 (EF-2), to form an intermediate called diphthine. The three successive methylation reactions represent the second step of diphthamide biosynthesis. The sequence is that of Diphthine synthase from Methanococcus vannielii (strain ATCC 35089 / DSM 1224 / JCM 13029 / OCM 148 / SB).